Reading from the N-terminus, the 637-residue chain is Serine protease Hayan (637 aa).

Positions 1-26 are cleaved as a signal peptide; sequence MAMISARRYFLLGLLVLTTSAYVTVG. The 49-residue stretch at 31–79 folds into the Clip domain; the sequence is PCQVRSDIPGICLSSSACENIRGYLKSGTLSTSQVPSCGFGAREEIICC. 3 cysteine pairs are disulfide-bonded: C32-C78, C42-C68, and C48-C79. Disordered stretches follow at residues 95 to 137, 152 to 178, 216 to 260, and 286 to 365; these read FHAT…LDEN, KPQKTHESLKLPTQESMKTPTHESMKM, QRSF…NNNN, and LQTT…EKER. Over residues 125-136 the composition is skewed to basic and acidic residues; the sequence is EGKRERESRLDE. Polar residues predominate over residues 234–244; sequence PLTTPRSRPQR. Residues 245–260 are compositionally biased toward low complexity; sequence PNNSNFNTNPSPNNNN. Over residues 306-320 the composition is skewed to basic and acidic residues; it reads EPYRFRGQDRDKDTQ. Over residues 321–332 the composition is skewed to polar residues; it reads PQEPWNDVSNNL. Disulfide bonds link C371-C497, C414-C430, C543-C567, and C578-C609. The Peptidase S1 domain occupies 385 to 632; sequence ILDGERVDRG…FLDYIEGIVW (248 aa). Catalysis depends on charge relay system residues H429 and D477. S582 acts as the Charge relay system in catalysis.

Belongs to the peptidase S1 family. CLIP subfamily.

The protein resides in the secreted. Functionally, serine protease which, by converting prophenoloxidase 1 (PPO1) into its active form, plays an essential role in the melanization immune response to physical or septic wounding. May function in diverse PPO1-activating cascades that are negatively controlled by different serpin proteins; Spn27A and Spn28D in the hemolymph, and Spn28D and Spn77BA in the trachea. Also required in the systematic wound response by mediating the redox-dependent activation of the JNK cytoprotective cascade in neuronal tissues after integument wounding. The chain is Serine protease Hayan from Drosophila melanogaster (Fruit fly).